The sequence spans 734 residues: Photosystem I P700 chlorophyll a apoprotein A2 (734 aa).

8 consecutive transmembrane segments (helical) span residues 46 to 69 (IFAS…FHVA), 135 to 158 (LYTG…LHLQ), 175 to 199 (LNHH…HVAI), 273 to 291 (MAHH…GHMY), 330 to 353 (IHFQ…QHMY), 369 to 395 (AALY…IFFI), 417 to 439 (AIIS…LYVH), and 517 to 535 (FLVH…LILV). [4Fe-4S] cluster contacts are provided by C559 and C568. 2 helical membrane passes run 575–596 (AFYL…YWHW) and 643–665 (LSVW…MFLI). Residues H654, M662, and Y670 each contribute to the chlorophyll a site. W671 provides a ligand contact to phylloquinone. Residues 707–727 (LVGLAHFSVGYIFTYAAFLIA) form a helical membrane-spanning segment.

The protein belongs to the PsaA/PsaB family. As to quaternary structure, the PsaA/B heterodimer binds the P700 chlorophyll special pair and subsequent electron acceptors. PSI consists of a core antenna complex that captures photons, and an electron transfer chain that converts photonic excitation into a charge separation. The eukaryotic PSI reaction center is composed of at least 11 subunits. It depends on P700 is a chlorophyll a/chlorophyll a' dimer, A0 is one or more chlorophyll a, A1 is one or both phylloquinones and FX is a shared 4Fe-4S iron-sulfur center. as a cofactor.

The protein resides in the plastid. It localises to the chloroplast thylakoid membrane. It catalyses the reaction reduced [plastocyanin] + hnu + oxidized [2Fe-2S]-[ferredoxin] = oxidized [plastocyanin] + reduced [2Fe-2S]-[ferredoxin]. Functionally, psaA and PsaB bind P700, the primary electron donor of photosystem I (PSI), as well as the electron acceptors A0, A1 and FX. PSI is a plastocyanin-ferredoxin oxidoreductase, converting photonic excitation into a charge separation, which transfers an electron from the donor P700 chlorophyll pair to the spectroscopically characterized acceptors A0, A1, FX, FA and FB in turn. Oxidized P700 is reduced on the lumenal side of the thylakoid membrane by plastocyanin. The polypeptide is Photosystem I P700 chlorophyll a apoprotein A2 (Arabis hirsuta (Hairy rock-cress)).